The sequence spans 301 residues: Bifunctional protein FolD (301 aa).

NADP(+) contacts are provided by residues 169 to 171 (GRS), serine 194, and isoleucine 235.

Belongs to the tetrahydrofolate dehydrogenase/cyclohydrolase family. Homodimer.

The catalysed reaction is (6R)-5,10-methylene-5,6,7,8-tetrahydrofolate + NADP(+) = (6R)-5,10-methenyltetrahydrofolate + NADPH. The enzyme catalyses (6R)-5,10-methenyltetrahydrofolate + H2O = (6R)-10-formyltetrahydrofolate + H(+). The protein operates within one-carbon metabolism; tetrahydrofolate interconversion. Functionally, catalyzes the oxidation of 5,10-methylenetetrahydrofolate to 5,10-methenyltetrahydrofolate and then the hydrolysis of 5,10-methenyltetrahydrofolate to 10-formyltetrahydrofolate. The chain is Bifunctional protein FolD from Gloeothece citriformis (strain PCC 7424) (Cyanothece sp. (strain PCC 7424)).